A 148-amino-acid chain; its full sequence is uncharacterized protein (148 aa).

This is an uncharacterized protein from Methanocaldococcus jannaschii (strain ATCC 43067 / DSM 2661 / JAL-1 / JCM 10045 / NBRC 100440) (Methanococcus jannaschii).